The following is a 381-amino-acid chain: MNLNFMPLLHAYNHASIDFHFNSSARDFCVHEVPLYEFSNTGEHAVIQVRKSGLSTLEMLQIFSQILGVRIAELGYAGLKDKNALTTQFISLPKKYAPLLEKNTSNFQEKNLKILSLNYHHNKIKLGHLKGNRFFMRFKKMTPLNAQKTKQVLEQIAQFGMPNYFGSQRFGKFNDNHQEGLKILQNQTKFAHQKLNAFLISSYQSYLFNALLSKRLEISKIISAFSVKENLEFFKQKNLSVDSDTLKTLKNQAHPFKILEGDVMCHYPYGKFFDALELEKEGERFLKKEVAPTGLLDGKKALYAKNLSLEIEKEFQHNLLSSHAKTLGSRRFFWVFVENVTSQYVKEKAQFELGFYLPKGSYASALLKEIKHEKGENNDEF.

Catalysis depends on Asp81, which acts as the Nucleophile. The region spanning 160–335 is the TRUD domain; that stretch reads GMPNYFGSQR…TLGSRRFFWV (176 aa).

It belongs to the pseudouridine synthase TruD family.

The enzyme catalyses uridine(13) in tRNA = pseudouridine(13) in tRNA. Its function is as follows. Responsible for synthesis of pseudouridine from uracil-13 in transfer RNAs. This is tRNA pseudouridine synthase D from Helicobacter pylori (strain ATCC 700392 / 26695) (Campylobacter pylori).